Reading from the N-terminus, the 340-residue chain is Protein jhp_1168 (340 aa).

As to quaternary structure, seems to interact with H.pylori HolB.

Its function is as follows. Could be the functional equivalent of DNA polymerase III delta subunit (HolA). The protein is Protein jhp_1168 of Helicobacter pylori (strain J99 / ATCC 700824) (Campylobacter pylori J99).